The primary structure comprises 610 residues: Glutamine--fructose-6-phosphate aminotransferase [isomerizing] (610 aa).

Cysteine 2 acts as the Nucleophile; for GATase activity in catalysis. The Glutamine amidotransferase type-2 domain occupies 2-219 (CGIVGATSER…EGDVADINRT (218 aa)). 2 SIS domains span residues 287–427 (AADI…YRGM) and 459–600 (LAQD…VDQP). Residue lysine 605 is the For Fru-6P isomerization activity of the active site.

In terms of assembly, homodimer.

The protein localises to the cytoplasm. The catalysed reaction is D-fructose 6-phosphate + L-glutamine = D-glucosamine 6-phosphate + L-glutamate. Its function is as follows. Catalyzes the first step in hexosamine metabolism, converting fructose-6P into glucosamine-6P using glutamine as a nitrogen source. This Idiomarina loihiensis (strain ATCC BAA-735 / DSM 15497 / L2-TR) protein is Glutamine--fructose-6-phosphate aminotransferase [isomerizing].